A 179-amino-acid chain; its full sequence is Crossover junction endodeoxyribonuclease RuvC (179 aa).

Catalysis depends on residues Asp-12, Glu-72, and Asp-144. Mg(2+)-binding residues include Asp-12, Glu-72, and Asp-144.

Belongs to the RuvC family. Homodimer which binds Holliday junction (HJ) DNA. The HJ becomes 2-fold symmetrical on binding to RuvC with unstacked arms; it has a different conformation from HJ DNA in complex with RuvA. In the full resolvosome a probable DNA-RuvA(4)-RuvB(12)-RuvC(2) complex forms which resolves the HJ. Mg(2+) serves as cofactor.

The protein localises to the cytoplasm. The enzyme catalyses Endonucleolytic cleavage at a junction such as a reciprocal single-stranded crossover between two homologous DNA duplexes (Holliday junction).. In terms of biological role, the RuvA-RuvB-RuvC complex processes Holliday junction (HJ) DNA during genetic recombination and DNA repair. Endonuclease that resolves HJ intermediates. Cleaves cruciform DNA by making single-stranded nicks across the HJ at symmetrical positions within the homologous arms, yielding a 5'-phosphate and a 3'-hydroxyl group; requires a central core of homology in the junction. The consensus cleavage sequence is 5'-(A/T)TT(C/G)-3'. Cleavage occurs on the 3'-side of the TT dinucleotide at the point of strand exchange. HJ branch migration catalyzed by RuvA-RuvB allows RuvC to scan DNA until it finds its consensus sequence, where it cleaves and resolves the cruciform DNA. The polypeptide is Crossover junction endodeoxyribonuclease RuvC (Dechloromonas aromatica (strain RCB)).